We begin with the raw amino-acid sequence, 165 residues long: Endoribonuclease YbeY (165 aa).

Positions 130, 134, and 140 each coordinate Zn(2+).

This sequence belongs to the endoribonuclease YbeY family. It depends on Zn(2+) as a cofactor.

The protein resides in the cytoplasm. Functionally, single strand-specific metallo-endoribonuclease involved in late-stage 70S ribosome quality control and in maturation of the 3' terminus of the 16S rRNA. The chain is Endoribonuclease YbeY from Streptococcus suis (strain 98HAH33).